Reading from the N-terminus, the 209-residue chain is Large ribosomal subunit protein uL3 (209 aa).

Residues 133-152 (THGNSLSHRVPGSIGQNQTP) are disordered. Residue Gln-150 is modified to N5-methylglutamine.

It belongs to the universal ribosomal protein uL3 family. Part of the 50S ribosomal subunit. Forms a cluster with proteins L14 and L19. Post-translationally, methylated by PrmB.

Functionally, one of the primary rRNA binding proteins, it binds directly near the 3'-end of the 23S rRNA, where it nucleates assembly of the 50S subunit. This Yersinia pseudotuberculosis serotype O:1b (strain IP 31758) protein is Large ribosomal subunit protein uL3.